The primary structure comprises 71 residues: Large ribosomal subunit protein bL31 (71 aa).

This sequence belongs to the bacterial ribosomal protein bL31 family. Type A subfamily. Part of the 50S ribosomal subunit.

Functionally, binds the 23S rRNA. The chain is Large ribosomal subunit protein bL31 from Metamycoplasma arthritidis (strain 158L3-1) (Mycoplasma arthritidis).